We begin with the raw amino-acid sequence, 264 residues long: 4-hydroxy-tetrahydrodipicolinate reductase (264 aa).

10–15 (GCLGRQ) contacts NAD(+). Residue Arg-37 coordinates NADP(+). Residues 99 to 101 (GTT) and 121 to 124 (SANL) each bind NAD(+). His-153 functions as the Proton donor/acceptor in the catalytic mechanism. (S)-2,3,4,5-tetrahydrodipicolinate is bound at residue His-154. Lys-157 (proton donor) is an active-site residue. 163–164 (GT) serves as a coordination point for (S)-2,3,4,5-tetrahydrodipicolinate.

Belongs to the DapB family.

The protein localises to the cytoplasm. The catalysed reaction is (S)-2,3,4,5-tetrahydrodipicolinate + NAD(+) + H2O = (2S,4S)-4-hydroxy-2,3,4,5-tetrahydrodipicolinate + NADH + H(+). The enzyme catalyses (S)-2,3,4,5-tetrahydrodipicolinate + NADP(+) + H2O = (2S,4S)-4-hydroxy-2,3,4,5-tetrahydrodipicolinate + NADPH + H(+). Its pathway is amino-acid biosynthesis; L-lysine biosynthesis via DAP pathway; (S)-tetrahydrodipicolinate from L-aspartate: step 4/4. Catalyzes the conversion of 4-hydroxy-tetrahydrodipicolinate (HTPA) to tetrahydrodipicolinate. This is 4-hydroxy-tetrahydrodipicolinate reductase from Ehrlichia ruminantium (strain Gardel).